We begin with the raw amino-acid sequence, 95 residues long: Probable dolichol-phosphate mannosyltransferase subunit 3 (95 aa).

The next 2 helical transmembrane spans lie at alanine 10–leucine 30 and alanine 44–valine 64.

The protein belongs to the DPM3 family.

It localises to the endoplasmic reticulum membrane. Its pathway is protein modification; protein glycosylation. Its function is as follows. Stabilizer subunit of the dolichol-phosphate-mannose synthase complex. This chain is Probable dolichol-phosphate mannosyltransferase subunit 3 (dpm-3), found in Caenorhabditis elegans.